A 470-amino-acid polypeptide reads, in one-letter code: Glutamate--tRNA ligase (470 aa).

The short motif at 9-19 is the 'HIGH' region element; the sequence is PSPTGFLHVGG. Residues 236–240 carry the 'KMSKS' region motif; that stretch reads RLSKR. Lys-239 contacts ATP.

It belongs to the class-I aminoacyl-tRNA synthetase family. Glutamate--tRNA ligase type 1 subfamily. Monomer.

Its subcellular location is the cytoplasm. The enzyme catalyses tRNA(Glu) + L-glutamate + ATP = L-glutamyl-tRNA(Glu) + AMP + diphosphate. Catalyzes the attachment of glutamate to tRNA(Glu) in a two-step reaction: glutamate is first activated by ATP to form Glu-AMP and then transferred to the acceptor end of tRNA(Glu). The sequence is that of Glutamate--tRNA ligase from Legionella pneumophila (strain Corby).